A 316-amino-acid chain; its full sequence is Retinol dehydrogenase 11 (316 aa).

A helical; Signal-anchor for type II membrane protein transmembrane segment spans residues 1-21; it reads MFGFLLLLSLPFILYLVTPKI. Over 22 to 316 the chain is Cytoplasmic; sequence RKMLSSGVCT…CDLLGLPVDW (295 aa). An NADP(+)-binding site is contributed by 45-51; the sequence is GANTGIG. Lys109 is subject to N6-acetyllysine. Residue Ser174 participates in substrate binding. Tyr199 (proton acceptor) is an active-site residue.

Belongs to the short-chain dehydrogenases/reductases (SDR) family. Not glycosylated. As to expression, expressed at high level in liver and testis. Expressed at lower levels in smooth muscle, thymus, submaxillary gland and epididymis. In testis, expression is restricted to pachytene spermatocytes. Also expressed in four layers of the retina, including the outer segment of rods and cones.

The protein localises to the endoplasmic reticulum membrane. It carries out the reaction all-trans-retinol + NADP(+) = all-trans-retinal + NADPH + H(+). The enzyme catalyses 11-cis-retinol + NADP(+) = 11-cis-retinal + NADPH + H(+). The catalysed reaction is 9-cis-retinol + NADP(+) = 9-cis-retinal + NADPH + H(+). It catalyses the reaction 13-cis-retinol + NADP(+) = 13-cis-retinal + NADPH + H(+). It carries out the reaction a medium-chain primary fatty alcohol + NADP(+) = a medium-chain fatty aldehyde + NADPH + H(+). The enzyme catalyses (2E,6Z)-nona-2,6-dien-1-ol + NADP(+) = (2E,6Z)-nona-2,6-dienal + NADPH + H(+). The catalysed reaction is (E)-oct-2-en-1-ol + NADP(+) = (2E)-octenal + NADPH + H(+). It catalyses the reaction (E)-non-2-en-1-ol + NADP(+) = (E)-non-2-enal + NADPH + H(+). It carries out the reaction heptan-1-ol + NADP(+) = heptanal + NADPH + H(+). The enzyme catalyses hexan-1-ol + NADP(+) = hexanal + NADPH + H(+). The catalysed reaction is decan-1-ol + NADP(+) = decanal + NADPH + H(+). It catalyses the reaction nonan-1-ol + NADP(+) = nonanal + NADPH + H(+). It carries out the reaction octan-1-ol + NADP(+) = octanal + NADPH + H(+). The enzyme catalyses (Z)-non-6-en-1-ol + NADP(+) = (Z)-non-6-enal + NADPH + H(+). It participates in cofactor metabolism; retinol metabolism. Functionally, retinol dehydrogenase with a clear preference for NADP. Displays high activity towards 9-cis, 11-cis and all-trans-retinol, and to a lesser extent on 13-cis-retinol. Also exhibits reductive activity towards toxic lipid peroxidation products such as medium-chain aldehydes trans-2-nonenal, nonanal, and cis-6-nonenal. Has no dehydrogenase activity towards steroid. Seems to be required for homeostasis of retinol in liver and testis. This is Retinol dehydrogenase 11 (Rdh11) from Mus musculus (Mouse).